Here is a 219-residue protein sequence, read N- to C-terminus: Peptide methionine sulfoxide reductase MsrA (219 aa).

The segment at 1 to 20 (MGLFRSPRQNLPTAADALPG) is disordered. Cys-55 is an active-site residue.

The protein belongs to the MsrA Met sulfoxide reductase family.

It catalyses the reaction L-methionyl-[protein] + [thioredoxin]-disulfide + H2O = L-methionyl-(S)-S-oxide-[protein] + [thioredoxin]-dithiol. The catalysed reaction is [thioredoxin]-disulfide + L-methionine + H2O = L-methionine (S)-S-oxide + [thioredoxin]-dithiol. Functionally, has an important function as a repair enzyme for proteins that have been inactivated by oxidation. Catalyzes the reversible oxidation-reduction of methionine sulfoxide in proteins to methionine. The sequence is that of Peptide methionine sulfoxide reductase MsrA from Rhodospirillum centenum (strain ATCC 51521 / SW).